The chain runs to 316 residues: MRQPLSWGRWRAMLARTYGPGPSAGYRWASGAQGYVRNPPVGACDLQGELDRFGGISVRLARLDALDRLDAAAFQKGLQAAVQQWRSEGRTAVWLHIPILQSRFIAPAASLGFCFHHAESDSSTLTLWLREGPSRLPGYASHQVGVAGAVFDESTRKILVVQDRNKLKNMWKFPGGLSEPEEDIGDTAVREVFEETGIKSEFRSVLSIRQQHTNPGAFGKSDMYIICRLKPYSFTINFCQEECLRCEWMDLNDLAKTENTTPITSRVARLLLYGYREGFDKIDLTVEELPAVYTGLFYKLYHKELPENYKTMKGID.

In terms of domain architecture, Nudix hydrolase spans 141-273 (SHQVGVAGAV…TSRVARLLLY (133 aa)). Residues 176 to 197 (GLSEPEEDIGDTAVREVFEETG) carry the Nudix box motif.

It belongs to the Nudix hydrolase family. In terms of assembly, monomer and homodimer. In terms of tissue distribution, detected in liver, kidney and esophagus (at protein level). Ubiquitous.

The protein resides in the cytoplasm. It is found in the nucleus. It localises to the mitochondrion. May contribute to the regulation of cell proliferation. The protein is Nucleoside diphosphate-linked moiety X motif 6 (NUDT6) of Homo sapiens (Human).